Consider the following 884-residue polypeptide: Probable leucine--tRNA ligase, cytoplasmic (884 aa).

Residues 40-50 (PYMNGKLHLGH) carry the 'HIGH' region motif. The 'KMSKS' region motif lies at 566-570 (KMSKS). Lys569 provides a ligand contact to ATP.

It belongs to the class-I aminoacyl-tRNA synthetase family.

Its subcellular location is the cytoplasm. It carries out the reaction tRNA(Leu) + L-leucine + ATP = L-leucyl-tRNA(Leu) + AMP + diphosphate. This is Probable leucine--tRNA ligase, cytoplasmic from Vairimorpha ceranae (strain BRL01) (Microsporidian parasite).